The sequence spans 724 residues: 1,3-beta-galactosyl-N-acetylhexosamine phosphorylase Cphy3030 (724 aa).

Asp-316 functions as the Proton donor in the catalytic mechanism.

The protein belongs to the glycoside hydrolase 112 family.

It carries out the reaction beta-D-galactosyl-(1-&gt;3)-N-acetyl-D-glucosamine + phosphate = alpha-D-galactose 1-phosphate + N-acetyl-D-glucosamine. In terms of biological role, reversibly phosphorolyzes beta-D-galactopyranosyl-(1-&gt;3)-N-acetyl-D-glucosamine to form alpha-D-galactopyranose 1-phosphate and acetyl-D-glucosamine. Active towards galacto-N-biose and lacto-N-biose. Does not phosphorolyze galacto-N-tetraose or lacto-N-tetraose. In the reverse reaction has activity toward N-acetyl-D-glucosamine and N-acetyl-D-galactosamine, but not L-rhamnose, D-glucose or D-galactose. This chain is 1,3-beta-galactosyl-N-acetylhexosamine phosphorylase Cphy3030, found in Lachnoclostridium phytofermentans (strain ATCC 700394 / DSM 18823 / ISDg) (Clostridium phytofermentans).